The sequence spans 173 residues: MNPYILTPDLNGEGLHIGIVRARFNEEIGQAQLQACLEELGKLGVDERDVMVVSVPGALELGVALARMAESYEFDALIALGAVIRGETYHFEVVSNESAAAISRIALETGIPVANGVLTVDTDEQAQARAAGKGADCAQVAVEMANLAAALEPEEDDEDDEDEDFDDEEDDGR.

5-amino-6-(D-ribitylamino)uracil-binding positions include Phe-24, 58–60 (ALE), and 82–84 (AVI). 87–88 (ET) contacts (2S)-2-hydroxy-3-oxobutyl phosphate. Catalysis depends on His-90, which acts as the Proton donor. Asn-115 provides a ligand contact to 5-amino-6-(D-ribitylamino)uracil. Arg-129 is a binding site for (2S)-2-hydroxy-3-oxobutyl phosphate. The tract at residues 150–173 (ALEPEEDDEDDEDEDFDDEEDDGR) is disordered. The segment covering 152-173 (EPEEDDEDDEDEDFDDEEDDGR) has biased composition (acidic residues).

This sequence belongs to the DMRL synthase family.

The catalysed reaction is (2S)-2-hydroxy-3-oxobutyl phosphate + 5-amino-6-(D-ribitylamino)uracil = 6,7-dimethyl-8-(1-D-ribityl)lumazine + phosphate + 2 H2O + H(+). It functions in the pathway cofactor biosynthesis; riboflavin biosynthesis; riboflavin from 2-hydroxy-3-oxobutyl phosphate and 5-amino-6-(D-ribitylamino)uracil: step 1/2. In terms of biological role, catalyzes the formation of 6,7-dimethyl-8-ribityllumazine by condensation of 5-amino-6-(D-ribitylamino)uracil with 3,4-dihydroxy-2-butanone 4-phosphate. This is the penultimate step in the biosynthesis of riboflavin. The sequence is that of 6,7-dimethyl-8-ribityllumazine synthase from Bordetella pertussis (strain Tohama I / ATCC BAA-589 / NCTC 13251).